Reading from the N-terminus, the 239-residue chain is RNA polymerase sigma-35 factor (239 aa).

The propeptide occupies 1-27 (MMKLKFYLVYLWYKVLLKLGIKTDEIY). A Polymerase core binding motif is present at residues 86-99 (DLISIGTIGLIKAV). The H-T-H motif DNA-binding region spans 206–225 (QKDVADMLGISQSYISRLEK).

Belongs to the sigma-70 factor family. Post-translationally, proteolytically cleaved in the N-terminus probably by a SpoIIGA homolog to yield the active peptide.

Functionally, sigma factors are initiation factors that promote the attachment of RNA polymerase to specific initiation sites and are then released. This sigma factor directs the transcription of crystal protein genes, a sporulation-regulated event. This chain is RNA polymerase sigma-35 factor (sigE), found in Bacillus anthracis.